The sequence spans 132 residues: Small ribosomal subunit protein uS8 (132 aa).

It belongs to the universal ribosomal protein uS8 family. Part of the 30S ribosomal subunit. Contacts proteins S5 and S12.

Its function is as follows. One of the primary rRNA binding proteins, it binds directly to 16S rRNA central domain where it helps coordinate assembly of the platform of the 30S subunit. The sequence is that of Small ribosomal subunit protein uS8 from Granulibacter bethesdensis (strain ATCC BAA-1260 / CGDNIH1).